Reading from the N-terminus, the 281-residue chain is Elongation factor Ts (281 aa).

The involved in Mg(2+) ion dislocation from EF-Tu stretch occupies residues 86–89 (TDFV).

The protein belongs to the EF-Ts family.

It localises to the cytoplasm. In terms of biological role, associates with the EF-Tu.GDP complex and induces the exchange of GDP to GTP. It remains bound to the aminoacyl-tRNA.EF-Tu.GTP complex up to the GTP hydrolysis stage on the ribosome. The chain is Elongation factor Ts from Beutenbergia cavernae (strain ATCC BAA-8 / DSM 12333 / CCUG 43141 / JCM 11478 / NBRC 16432 / NCIMB 13614 / HKI 0122).